The following is a 372-amino-acid chain: Uroporphyrinogen decarboxylase (372 aa).

Substrate is bound by residues 35–39, Asp-85, Tyr-166, Ser-221, and His-342; that span reads RQAGR.

Belongs to the uroporphyrinogen decarboxylase family. As to quaternary structure, homodimer.

It is found in the cytoplasm. It catalyses the reaction uroporphyrinogen III + 4 H(+) = coproporphyrinogen III + 4 CO2. Its pathway is porphyrin-containing compound metabolism; protoporphyrin-IX biosynthesis; coproporphyrinogen-III from 5-aminolevulinate: step 4/4. In terms of biological role, catalyzes the decarboxylation of four acetate groups of uroporphyrinogen-III to yield coproporphyrinogen-III. The chain is Uroporphyrinogen decarboxylase from Methylibium petroleiphilum (strain ATCC BAA-1232 / LMG 22953 / PM1).